A 299-amino-acid polypeptide reads, in one-letter code: DNA-binding transcriptional activator HetR (299 aa).

Serine 152 is a catalytic residue.

Belongs to the peptidase S48 family. In terms of assembly, homodimer; disulfide-linked.

Functionally, might be involved in temporal and/or spatial regulation of nitrogen fixation. Dimerization is required for DNA-binding. Has both a protease and a DNA-binding activity. This Leptolyngbya boryana (Plectonema boryanum) protein is DNA-binding transcriptional activator HetR.